The primary structure comprises 534 residues: CTP synthase (534 aa).

The segment at 1-267 (MTKYIFVTGG…GDLIIERLAL (267 aa)) is amidoligase domain. Serine 13 contributes to the CTP binding site. Serine 13 serves as a coordination point for UTP. Position 14 to 19 (14 to 19 (SVGKGI)) interacts with ATP. An L-glutamine-binding site is contributed by tyrosine 54. Aspartate 71 lines the ATP pocket. 2 residues coordinate Mg(2+): aspartate 71 and glutamate 141. CTP-binding positions include 148 to 150 (DIE), 188 to 193 (KTKPTQ), and lysine 224. UTP is bound by residues 188–193 (KTKPTQ) and lysine 224. The Glutamine amidotransferase type-1 domain occupies 292-534 (TVAIVGKYVE…VQAALEQIAE (243 aa)). Glycine 354 is a binding site for L-glutamine. The active-site Nucleophile; for glutamine hydrolysis is the cysteine 381. Residues 382-385 (LGMQ), glutamate 405, and arginine 462 each bind L-glutamine. Residues histidine 507 and glutamate 509 contribute to the active site.

The protein belongs to the CTP synthase family. In terms of assembly, homotetramer.

It catalyses the reaction UTP + L-glutamine + ATP + H2O = CTP + L-glutamate + ADP + phosphate + 2 H(+). It carries out the reaction L-glutamine + H2O = L-glutamate + NH4(+). The enzyme catalyses UTP + NH4(+) + ATP = CTP + ADP + phosphate + 2 H(+). Its pathway is pyrimidine metabolism; CTP biosynthesis via de novo pathway; CTP from UDP: step 2/2. Its activity is regulated as follows. Allosterically activated by GTP, when glutamine is the substrate; GTP has no effect on the reaction when ammonia is the substrate. The allosteric effector GTP functions by stabilizing the protein conformation that binds the tetrahedral intermediate(s) formed during glutamine hydrolysis. Inhibited by the product CTP, via allosteric rather than competitive inhibition. Its function is as follows. Catalyzes the ATP-dependent amination of UTP to CTP with either L-glutamine or ammonia as the source of nitrogen. Regulates intracellular CTP levels through interactions with the four ribonucleotide triphosphates. The protein is CTP synthase of Herpetosiphon aurantiacus (strain ATCC 23779 / DSM 785 / 114-95).